The sequence spans 384 residues: NADH-quinone oxidoreductase subunit D 2 (384 aa).

Belongs to the complex I 49 kDa subunit family. As to quaternary structure, NDH-1 is composed of 14 different subunits. Subunits NuoB, C, D, E, F, and G constitute the peripheral sector of the complex.

The protein resides in the cell membrane. It catalyses the reaction a quinone + NADH + 5 H(+)(in) = a quinol + NAD(+) + 4 H(+)(out). In terms of biological role, NDH-1 shuttles electrons from NADH, via FMN and iron-sulfur (Fe-S) centers, to quinones in the respiratory chain. The immediate electron acceptor for the enzyme in this species is believed to be a menaquinone. Couples the redox reaction to proton translocation (for every two electrons transferred, four hydrogen ions are translocated across the cytoplasmic membrane), and thus conserves the redox energy in a proton gradient. This chain is NADH-quinone oxidoreductase subunit D 2, found in Symbiobacterium thermophilum (strain DSM 24528 / JCM 14929 / IAM 14863 / T).